The sequence spans 129 residues: Glycine cleavage system H protein (129 aa).

One can recognise a Lipoyl-binding domain in the interval 24 to 106; the sequence is TYTVGITEHA…YVGGWIFKIK (83 aa). K65 is modified (N6-lipoyllysine).

This sequence belongs to the GcvH family. As to quaternary structure, the glycine cleavage system is composed of four proteins: P, T, L and H. (R)-lipoate serves as cofactor.

Its function is as follows. The glycine cleavage system catalyzes the degradation of glycine. The H protein shuttles the methylamine group of glycine from the P protein to the T protein. This Salmonella paratyphi B (strain ATCC BAA-1250 / SPB7) protein is Glycine cleavage system H protein.